A 235-amino-acid polypeptide reads, in one-letter code: uncharacterized protein (235 aa).

Disordered stretches follow at residues 20–64 (IHPN…LPIK) and 140–164 (SQFFNNNNNNNNNNNNSNNNKNFDQ). Composition is skewed to low complexity over residues 30–60 (NNNNNINNNNNNNNNNNNNNNNNNNNNSNNN) and 140–161 (SQFFNNNNNNNNNNNNSNNNKN). Positions 174–213 (KYMEFLSDIEQLNSDLKESKDNLESISIEMVLLETRLKGL) form a coiled coil.

This is an uncharacterized protein from Dictyostelium discoideum (Social amoeba).